The following is a 122-amino-acid chain: Proteasome assembly chaperone 3 (122 aa).

M1 bears the N-acetylmethionine mark.

This sequence belongs to the PSMG3 family. Homodimer. Interacts with PSMG4. Interacts directly with alpha and beta subunits of the 20S proteasome but dissociates before the formation of half-proteasomes, probably upon recruitment of POMP.

Functionally, chaperone protein which promotes assembly of the 20S proteasome. May cooperate with PSMG1-PSMG2 heterodimers to orchestrate the correct assembly of proteasomes. This chain is Proteasome assembly chaperone 3, found in Homo sapiens (Human).